The primary structure comprises 448 residues: Bifunctional protein GlmU (448 aa).

Positions 1 to 229 are pyrophosphorylase; it reads MNNHTLNIII…NDEIQGINNL (229 aa). UDP-N-acetyl-alpha-D-glucosamine contacts are provided by residues 11–14, Lys-25, Gln-76, 81–82, 103–105, Gly-140, Glu-154, Asn-169, and Asn-227; these read LAAG, GT, and YGD. Asp-105 serves as a coordination point for Mg(2+). Asn-227 provides a ligand contact to Mg(2+). The linker stretch occupies residues 230 to 250; sequence LQLVRAEKIYQKQQAKLLLLS. Residues 251–448 form an N-acetyltransferase region; it reads GIMIYNPSNF…NEKKQIHKKL (198 aa). Lys-351 contacts UDP-N-acetyl-alpha-D-glucosamine. Residue His-363 is the Proton acceptor of the active site. Positions 366 and 377 each coordinate UDP-N-acetyl-alpha-D-glucosamine. Acetyl-CoA-binding positions include Ala-380, 386–387, Ser-405, and Ala-423; that span reads NY.

This sequence in the N-terminal section; belongs to the N-acetylglucosamine-1-phosphate uridyltransferase family. In the C-terminal section; belongs to the transferase hexapeptide repeat family. In terms of assembly, homotrimer. Mg(2+) is required as a cofactor.

It localises to the cytoplasm. It carries out the reaction alpha-D-glucosamine 1-phosphate + acetyl-CoA = N-acetyl-alpha-D-glucosamine 1-phosphate + CoA + H(+). It catalyses the reaction N-acetyl-alpha-D-glucosamine 1-phosphate + UTP + H(+) = UDP-N-acetyl-alpha-D-glucosamine + diphosphate. It participates in nucleotide-sugar biosynthesis; UDP-N-acetyl-alpha-D-glucosamine biosynthesis; N-acetyl-alpha-D-glucosamine 1-phosphate from alpha-D-glucosamine 6-phosphate (route II): step 2/2. Its pathway is nucleotide-sugar biosynthesis; UDP-N-acetyl-alpha-D-glucosamine biosynthesis; UDP-N-acetyl-alpha-D-glucosamine from N-acetyl-alpha-D-glucosamine 1-phosphate: step 1/1. The protein operates within bacterial outer membrane biogenesis; LPS lipid A biosynthesis. Functionally, catalyzes the last two sequential reactions in the de novo biosynthetic pathway for UDP-N-acetylglucosamine (UDP-GlcNAc). The C-terminal domain catalyzes the transfer of acetyl group from acetyl coenzyme A to glucosamine-1-phosphate (GlcN-1-P) to produce N-acetylglucosamine-1-phosphate (GlcNAc-1-P), which is converted into UDP-GlcNAc by the transfer of uridine 5-monophosphate (from uridine 5-triphosphate), a reaction catalyzed by the N-terminal domain. The protein is Bifunctional protein GlmU of Buchnera aphidicola subsp. Baizongia pistaciae (strain Bp).